The sequence spans 127 residues: Fluoride-specific ion channel FluC (127 aa).

The next 4 helical transmembrane spans lie at 3 to 23, 36 to 56, 72 to 92, and 101 to 121; these read ALLL…LLGV, GTFA…GGLA, VGAL…ALMI, and FAYS…GLLL. Na(+) contacts are provided by G76 and T79.

It belongs to the fluoride channel Fluc/FEX (TC 1.A.43) family.

It localises to the cell inner membrane. It catalyses the reaction fluoride(in) = fluoride(out). Na(+) is not transported, but it plays an essential structural role and its presence is essential for fluoride channel function. In terms of biological role, fluoride-specific ion channel. Important for reducing fluoride concentration in the cell, thus reducing its toxicity. This is Fluoride-specific ion channel FluC from Phenylobacterium zucineum (strain HLK1).